The sequence spans 101 residues: ATP synthase subunit c (101 aa).

The next 2 helical transmembrane spans lie at 31 to 51 (AFAYLGAGLAMIGVIGVGAGQ) and 81 to 101 (AISETSSIYALLVALILIFVG).

The protein belongs to the ATPase C chain family. As to quaternary structure, F-type ATPases have 2 components, F(1) - the catalytic core - and F(0) - the membrane proton channel. F(1) has five subunits: alpha(3), beta(3), gamma(1), delta(1), epsilon(1). F(0) has three main subunits: a(1), b(2) and c(10-14). The alpha and beta chains form an alternating ring which encloses part of the gamma chain. F(1) is attached to F(0) by a central stalk formed by the gamma and epsilon chains, while a peripheral stalk is formed by the delta and b chains.

It localises to the cell membrane. F(1)F(0) ATP synthase produces ATP from ADP in the presence of a proton or sodium gradient. F-type ATPases consist of two structural domains, F(1) containing the extramembraneous catalytic core and F(0) containing the membrane proton channel, linked together by a central stalk and a peripheral stalk. During catalysis, ATP synthesis in the catalytic domain of F(1) is coupled via a rotary mechanism of the central stalk subunits to proton translocation. Its function is as follows. Key component of the F(0) channel; it plays a direct role in translocation across the membrane. A homomeric c-ring of between 10-14 subunits forms the central stalk rotor element with the F(1) delta and epsilon subunits. The protein is ATP synthase subunit c of Mesomycoplasma hyopneumoniae (strain 232) (Mycoplasma hyopneumoniae).